We begin with the raw amino-acid sequence, 80 residues long: MAITKTSVTLLLLIIMAASLSNFSVLASEIKPTGRVDNQCKEMCSATFGDGKCAADCRKAGFSSGRCLTSSPFGNKCCCT.

The first 27 residues, 1 to 27 (MAITKTSVTLLLLIIMAASLSNFSVLA), serve as a signal peptide directing secretion. 4 disulfides stabilise this stretch: C40/C79, C44/C67, C53/C77, and C57/C78.

This sequence belongs to the DEFL family.

It is found in the secreted. The protein is Defensin-like protein 44 of Arabidopsis thaliana (Mouse-ear cress).